The primary structure comprises 265 residues: Urease accessory protein UreH (265 aa).

Belongs to the UreD family. UreH, UreF and UreG form a complex that acts as a GTP-hydrolysis-dependent molecular chaperone, activating the urease apoprotein by helping to assemble the nickel containing metallocenter of UreC. The UreE protein probably delivers the nickel.

It localises to the cytoplasm. Functionally, required for maturation of urease via the functional incorporation of the urease nickel metallocenter. In Helicobacter pylori (strain HPAG1), this protein is Urease accessory protein UreH.